Reading from the N-terminus, the 51-residue chain is Large ribosomal subunit protein eL39 (51 aa).

The protein belongs to the eukaryotic ribosomal protein eL39 family.

This Methanothermobacter thermautotrophicus (strain ATCC 29096 / DSM 1053 / JCM 10044 / NBRC 100330 / Delta H) (Methanobacterium thermoautotrophicum) protein is Large ribosomal subunit protein eL39 (rpl39e).